The chain runs to 172 residues: Crossover junction endodeoxyribonuclease RuvC (172 aa).

Catalysis depends on residues Asp-11, Glu-70, and Asp-142. Asp-11, Glu-70, and Asp-142 together coordinate Mg(2+).

The protein belongs to the RuvC family. As to quaternary structure, homodimer which binds Holliday junction (HJ) DNA. The HJ becomes 2-fold symmetrical on binding to RuvC with unstacked arms; it has a different conformation from HJ DNA in complex with RuvA. In the full resolvosome a probable DNA-RuvA(4)-RuvB(12)-RuvC(2) complex forms which resolves the HJ. Requires Mg(2+) as cofactor.

It localises to the cytoplasm. It carries out the reaction Endonucleolytic cleavage at a junction such as a reciprocal single-stranded crossover between two homologous DNA duplexes (Holliday junction).. The RuvA-RuvB-RuvC complex processes Holliday junction (HJ) DNA during genetic recombination and DNA repair. Endonuclease that resolves HJ intermediates. Cleaves cruciform DNA by making single-stranded nicks across the HJ at symmetrical positions within the homologous arms, yielding a 5'-phosphate and a 3'-hydroxyl group; requires a central core of homology in the junction. The consensus cleavage sequence is 5'-(A/T)TT(C/G)-3'. Cleavage occurs on the 3'-side of the TT dinucleotide at the point of strand exchange. HJ branch migration catalyzed by RuvA-RuvB allows RuvC to scan DNA until it finds its consensus sequence, where it cleaves and resolves the cruciform DNA. This is Crossover junction endodeoxyribonuclease RuvC from Hydrogenovibrio crunogenus (strain DSM 25203 / XCL-2) (Thiomicrospira crunogena).